The following is a 372-amino-acid chain: Chaperone protein DnaJ (372 aa).

In terms of domain architecture, J spans 5–69 (DYYEVLGVSK…DKRKQYDQFG (65 aa)). Residues 139–221 (GVDKIIELDL…CKGKGKYLER (83 aa)) form a CR-type zinc finger. Residues cysteine 152, cysteine 155, cysteine 169, cysteine 172, cysteine 195, cysteine 198, cysteine 209, and cysteine 212 each contribute to the Zn(2+) site. CXXCXGXG motif repeat units lie at residues 152–159 (CSACFGSG), 169–176 (CNNCHGTG), 195–202 (CNVCNGAG), and 209–216 (CKNCKGKG).

It belongs to the DnaJ family. As to quaternary structure, homodimer. Zn(2+) is required as a cofactor.

The protein localises to the cytoplasm. Participates actively in the response to hyperosmotic and heat shock by preventing the aggregation of stress-denatured proteins and by disaggregating proteins, also in an autonomous, DnaK-independent fashion. Unfolded proteins bind initially to DnaJ; upon interaction with the DnaJ-bound protein, DnaK hydrolyzes its bound ATP, resulting in the formation of a stable complex. GrpE releases ADP from DnaK; ATP binding to DnaK triggers the release of the substrate protein, thus completing the reaction cycle. Several rounds of ATP-dependent interactions between DnaJ, DnaK and GrpE are required for fully efficient folding. Also involved, together with DnaK and GrpE, in the DNA replication of plasmids through activation of initiation proteins. This Mycoplasma capricolum subsp. capricolum (strain California kid / ATCC 27343 / NCTC 10154) protein is Chaperone protein DnaJ.